Consider the following 91-residue polypeptide: Sec-independent protein translocase protein TatA (91 aa).

The helical transmembrane segment at 1 to 21 (MGIFDWKHWIVILIVVVLVFG) threads the bilayer. A disordered region spans residues 42–91 (AMNDDDKPAEQPAPQPQQAQAAPQGSPLNQPHTIDAQAHKVDEPIRKDQV). Residues 51 to 65 (EQPAPQPQQAQAAPQ) show a composition bias toward low complexity. The segment covering 78 to 91 (QAHKVDEPIRKDQV) has biased composition (basic and acidic residues).

This sequence belongs to the TatA/E family. The Tat system comprises two distinct complexes: a TatABC complex, containing multiple copies of TatA, TatB and TatC subunits, and a separate TatA complex, containing only TatA subunits. Substrates initially bind to the TatABC complex, which probably triggers association of the separate TatA complex to form the active translocon.

The protein resides in the cell inner membrane. In terms of biological role, part of the twin-arginine translocation (Tat) system that transports large folded proteins containing a characteristic twin-arginine motif in their signal peptide across membranes. TatA could form the protein-conducting channel of the Tat system. This chain is Sec-independent protein translocase protein TatA, found in Pseudomonas savastanoi pv. phaseolicola (strain 1448A / Race 6) (Pseudomonas syringae pv. phaseolicola (strain 1448A / Race 6)).